The chain runs to 209 residues: NADH-ubiquinone oxidoreductase subunit 9 (209 aa).

The protein belongs to the complex I 30 kDa subunit family. In terms of assembly, complex I is composed of about 30 different subunits.

Its subcellular location is the mitochondrion inner membrane. It carries out the reaction a ubiquinone + NADH + 5 H(+)(in) = a ubiquinol + NAD(+) + 4 H(+)(out). In terms of biological role, core subunit of the mitochondrial membrane respiratory chain NADH dehydrogenase (Complex I) that is believed to belong to the minimal assembly required for catalysis. Complex I functions in the transfer of electrons from NADH to the respiratory chain. The immediate electron acceptor for the enzyme is believed to be ubiquinone. The sequence is that of NADH-ubiquinone oxidoreductase subunit 9 (NAD9) from Paramecium tetraurelia.